A 256-amino-acid chain; its full sequence is Proteasome subunit alpha-type 8 (256 aa).

This sequence belongs to the peptidase T1A family. In terms of assembly, component of the outer alpha-ring of the 20S proteasome core which is composed of 28 subunits that are arranged in four stacked rings, resulting in a barrel-shaped structure. The catalytic chamber with the active sites is on the inside of the barrel. Interacts with canonical subunits of the spermatoproteasome, including proteasome activators PSME4 (also called PA200) and PSME3 (also called PA28-gamma). Interacts with proteasome-interacting proteins chaperones, ubiquitin ligases and ubiquitin specific proteases. Interacts with meiotic proteins cyclin dependent kinase CDK1 and the ATPase TRIP13 as well as proteins of the synaptonemal complex SIX6OS1 and SYCE3.

The protein localises to the nucleus. Functionally, component of the spermatoproteasome, a proteasome specifically found in testis that promotes acetylation-dependent degradation of histones, thereby participating actively to the exchange of histones during spermatogenesis. The proteasome is a protein complex that degrades unneeded or damaged proteins by proteolysis, a chemical reaction that breaks peptide bonds. Required for 20S core proteasome assembly, essential for the degradation of meiotic proteins RAD51 and RPA1 at late prophase I and the progression of meiosis I during spermatogenesis. Localizes to the synaptonemal complex, a 'zipper'-like structure that holds homologous chromosome pairs in synapsis during meiotic prophase I. In Homo sapiens (Human), this protein is Proteasome subunit alpha-type 8 (PSMA8).